We begin with the raw amino-acid sequence, 226 residues long: Protein DEHYDRATION-INDUCED 19 (226 aa).

Residues 158-208 (FPTSDTEETSKPPISIPDDASVIKETPAQPWDSSIDSSLTREEREQKRKQA) are disordered. Basic and acidic residues predominate over residues 196–205 (LTREEREQKR).

The protein belongs to the Di19 family.

The chain is Protein DEHYDRATION-INDUCED 19 (DI19-1) from Oryza sativa subsp. japonica (Rice).